Consider the following 348-residue polypeptide: Rhodopsin (348 aa).

The residue at position 1 (M1) is an N-acetylmethionine. Residues 1–36 are Extracellular-facing; it reads MNGTEGLNFYVPFSNKTGVVRSPFEYPQYYLAEPWQ. 2 N-linked (GlcNAc...) asparagine glycosylation sites follow: N2 and N15. A helical transmembrane segment spans residues 37 to 61; sequence FSVLAAYMFLLIVLGFPINFLTLYV. The Cytoplasmic segment spans residues 62-73; it reads TVQHKKLRTPLN. Residues 74–99 form a helical membrane-spanning segment; that stretch reads YILLNLAVANLFMVFGGFTTTLYTSL. The Extracellular portion of the chain corresponds to 100–111; sequence HAYFVFGPTGCN. C110 and C187 are oxidised to a cystine. A helical membrane pass occupies residues 112–133; it reads LEGFFATLGGEIALWSLVVLAI. Positions 134–136 match the 'Ionic lock' involved in activated form stabilization motif; that stretch reads ERY. Residues 134–152 lie on the Cytoplasmic side of the membrane; the sequence is ERYVVVCKPMSNFRFGENH. Residues 153–173 traverse the membrane as a helical segment; the sequence is AIMGLALTWIMAMACAAAPLV. Topologically, residues 174–202 are extracellular; that stretch reads GWSRYIPEGMQCSCGIDYYTSRQEVNNES. A Zn(2+)-binding site is contributed by E201. The helical transmembrane segment at 203–227 threads the bilayer; the sequence is FVIYMFVVHFTIPLVIIFFCYGQLV. Topologically, residues 228–252 are cytoplasmic; sequence FTVKEAAAQQQESATTQKAEKEVTR. A helical transmembrane segment spans residues 253-274; that stretch reads MVIIMVVAFLICWVPYASVAFY. Residues 275-286 lie on the Extracellular side of the membrane; sequence IFTHQGSDFGPI. Residue Q279 coordinates Zn(2+). Residues 287 to 306 form a helical membrane-spanning segment; that stretch reads FMTIPSFFAKSSSIYNPVIY. An N6-(retinylidene)lysine modification is found at K296. Residues 307-348 lie on the Cytoplasmic side of the membrane; it reads IMMNKQFRNCMLTTLCCGRNPLGDDEASTTASKTETSQVAPA. S-palmitoyl cysteine attachment occurs at residues C322 and C323. Position 334 is a phosphoserine (S334). Phosphothreonine occurs at positions 335 and 336. Position 338 is a phosphoserine (S338). Residues T340 and T342 each carry the phosphothreonine modification. S343 is subject to Phosphoserine.

Belongs to the G-protein coupled receptor 1 family. Opsin subfamily. As to quaternary structure, homodimer. May form a complex composed of RHO, GRK1 and RCVRN in a Ca(2+)-dependent manner; RCVRN prevents the interaction between GRK1 and RHO. Interacts with GRK1. Interacts (phosphorylated form) with SAG. Interacts with GNAT1. Interacts with GNAT3. SAG and G-proteins compete for a common binding site. Interacts with PRCD; the interaction promotes PRCD stability. Forms a complex with ASAP1 and ARF4. Forms a complex with ASAP1, RAB11A, Rabin8/RAB3IP, ARF4 and RAB11FIP3; the complex regulates Golgi-to-cilia rhodopsin/RHO transport in photoreceptors. Contains one covalently linked retinal chromophore. Upon light absorption, the covalently bound 11-cis-retinal is converted to all-trans-retinal. After hydrolysis of the Schiff base and release of the covalently bound all-trans-retinal, active rhodopsin is regenerated by binding of a fresh molecule of 11-cis-retinal.

The protein localises to the membrane. It localises to the cell projection. It is found in the cilium. Its subcellular location is the photoreceptor outer segment. Its function is as follows. Photoreceptor required for image-forming vision at low light intensity. Light-induced isomerization of 11-cis to all-trans retinal triggers a conformational change that activates signaling via G-proteins. Signaling mediates the activation of phospholipase C. Subsequent receptor phosphorylation mediates displacement of the bound G-protein alpha subunit by arrestin and terminates signaling. This is Rhodopsin (RHO) from Tursiops truncatus (Atlantic bottle-nosed dolphin).